We begin with the raw amino-acid sequence, 722 residues long: Homeobox-leucine zipper protein HDG11 (722 aa).

Gly residues predominate over residues Met-1 to Gly-19. Residues Met-1 to Gln-42 form a disordered region. The segment covering Gly-20 to Arg-31 has biased composition (basic and acidic residues). The homeobox DNA-binding region spans Lys-32–His-91. The stretch at Gln-81–Lys-161 forms a coiled coil. In terms of domain architecture, START spans Ser-227–Ser-460.

It belongs to the HD-ZIP homeobox family. Class IV subfamily. In terms of assembly, interacts with BBM. As to expression, expressed in apical meristems and young epidermal tissue including trichomes and stipules. Expressed in lateral root tips, the L1 layer of apical inflorescence meristems and early flower primordia, carpel and petal epidermis, stigma papillae, ovule primordia, nucellus and embryo.

Its subcellular location is the nucleus. Transcription factor which acts as a positive regulator of drought stress tolerance. Can transactivate CIPK3, NCED3 and ERECTA. Transactivates several cell-wall-loosening protein genes by directly binding to HD motifs in their promoters. These target genes play important roles in coordinating cell-wall extensibility with root development and growth. Transactivates CYP74A/AOS, AOC3, OPR3 and 4CLL5/OPCL1 genes by directly binding to HD motifs in their promoters. These target genes are involved in jasmonate (JA) biosynthesis, and JA signaling affects root architecture by activating auxin signaling, which promotes lateral root formation. Acts as a negative regulator of trichome branching. Required for the establishment of giant cell identity on the abaxial side of sepals. Seems to promote cell differentiation. May regulate cell differentiation and proliferation during root and shoot meristem development. The chain is Homeobox-leucine zipper protein HDG11 from Arabidopsis thaliana (Mouse-ear cress).